Consider the following 308-residue polypeptide: tRNA dimethylallyltransferase 2 (308 aa).

13–20 (GPTASGKT) provides a ligand contact to ATP. Residue 15–20 (TASGKT) participates in substrate binding. The tract at residues 38 to 41 (DSRQ) is interaction with substrate tRNA.

It belongs to the IPP transferase family. As to quaternary structure, monomer. Mg(2+) serves as cofactor.

It catalyses the reaction adenosine(37) in tRNA + dimethylallyl diphosphate = N(6)-dimethylallyladenosine(37) in tRNA + diphosphate. In terms of biological role, catalyzes the transfer of a dimethylallyl group onto the adenine at position 37 in tRNAs that read codons beginning with uridine, leading to the formation of N6-(dimethylallyl)adenosine (i(6)A). This chain is tRNA dimethylallyltransferase 2, found in Bacteroides fragilis (strain YCH46).